We begin with the raw amino-acid sequence, 428 residues long: Cysteine--tRNA ligase (428 aa).

C23 provides a ligand contact to Zn(2+). The 'HIGH' region motif lies at 25 to 35; that stretch reads PTVYNDLHLGN. The Zn(2+) site is built by C196, H221, and E225. The short motif at 253 to 257 is the 'KMSKS' region element; that stretch reads KMSKS. K256 is an ATP binding site.

The protein belongs to the class-I aminoacyl-tRNA synthetase family. In terms of assembly, monomer. The cofactor is Zn(2+).

It localises to the cytoplasm. It carries out the reaction tRNA(Cys) + L-cysteine + ATP = L-cysteinyl-tRNA(Cys) + AMP + diphosphate. This is Cysteine--tRNA ligase (cysS) from Mycoplasma genitalium (strain ATCC 33530 / DSM 19775 / NCTC 10195 / G37) (Mycoplasmoides genitalium).